The chain runs to 480 residues: Glutamate--tRNA ligase (480 aa).

The short motif at 21–31 (PSPTGYLHVGG) is the 'HIGH' region element. Residues Cys-110, Cys-112, Cys-137, and His-139 each contribute to the Zn(2+) site. The 'KMSKS' region signature appears at 248 to 252 (KLSKR). Lys-251 lines the ATP pocket.

This sequence belongs to the class-I aminoacyl-tRNA synthetase family. Glutamate--tRNA ligase type 1 subfamily. As to quaternary structure, monomer. The cofactor is Zn(2+).

It is found in the cytoplasm. It carries out the reaction tRNA(Glu) + L-glutamate + ATP = L-glutamyl-tRNA(Glu) + AMP + diphosphate. Catalyzes the attachment of glutamate to tRNA(Glu) in a two-step reaction: glutamate is first activated by ATP to form Glu-AMP and then transferred to the acceptor end of tRNA(Glu). The polypeptide is Glutamate--tRNA ligase (Histophilus somni (strain 129Pt) (Haemophilus somnus)).